A 487-amino-acid polypeptide reads, in one-letter code: Kynureninase 1 (487 aa).

Residues L149, T150, 177–180 (FPSD), S234, D263, H266, and Y288 contribute to the pyridoxal 5'-phosphate site. K289 is modified (N6-(pyridoxal phosphate)lysine). Residues W329 and N357 each contribute to the pyridoxal 5'-phosphate site.

This sequence belongs to the kynureninase family. In terms of assembly, homodimer. It depends on pyridoxal 5'-phosphate as a cofactor.

The protein localises to the cytoplasm. The enzyme catalyses L-kynurenine + H2O = anthranilate + L-alanine + H(+). It carries out the reaction 3-hydroxy-L-kynurenine + H2O = 3-hydroxyanthranilate + L-alanine + H(+). It participates in amino-acid degradation; L-kynurenine degradation; L-alanine and anthranilate from L-kynurenine: step 1/1. The protein operates within cofactor biosynthesis; NAD(+) biosynthesis; quinolinate from L-kynurenine: step 2/3. Functionally, catalyzes the cleavage of L-kynurenine (L-Kyn) and L-3-hydroxykynurenine (L-3OHKyn) into anthranilic acid (AA) and 3-hydroxyanthranilic acid (3-OHAA), respectively. The polypeptide is Kynureninase 1 (bna5-1) (Emericella nidulans (strain FGSC A4 / ATCC 38163 / CBS 112.46 / NRRL 194 / M139) (Aspergillus nidulans)).